Consider the following 1483-residue polypeptide: MQRSPLEKASVLSKLFFSWTRPILIKGYRQRLELSDIYQVPSTDSADHLSEKLEREWDRELASKKNPKLINALRRCFFWRFAFYGILLYLGEVTKAVQPLLLGRIIASYDPDNKQERSIAIYLAIGLCLLFIMRPLLLHPAIFGLHHIGMQIRIAMFSLIYKKTLKLSSRVLDKISIGQLVSLLSNNLNKFDEGLALAHFVWIAPLQVTLLMGLLWDLLQASAFCGLAFLIVLALVQAGLGRMIMKYRDQRAGKINERLVITSEVIENIQSVKAYCWEEAMEKIIENIRQTELKLTRKAAHVRYFNSSAFFFSGFFVVSLSVLPYALIKTIILRKIFTTISFCIVLRMAVTRQFPWAVQTWYDSLGAINKIQDFLQKQEYKTLEYNLTTTEVMMENVTAFWEEGFGELLEKAKENSNDRKISNGDNSLFFSNFSLLGTPVLKDINFKIERGQLLAVAGSTGAGKTSLLMMIMGELEPSEGKIKHSGRISFCSQFSWIMPGTIKENIIFGVSYDEYRYRSVIKACQLEEDISKFAEKDNIVLGEGGVTLSGGQRARISLARAVYKDADLYLLDSPFGYLDVLTEKEIFESCVCKLMANKTRILVTSKMEHLKKADKVLILHEGSCYFYGTFSELQSLRPDFSSKLMGYDSFDQFSPERRNSIITETLRRFSLEGDAAVPWNETKKQSFKQTGEFGEKRKNSILNPINSIRKFSIVQKTPLPMNGIEGESEVPVERRLSLFPDCEQGEAILPRSNMINTGPTLRRQRRQSVLNLMTRSSVNQGQSIHRRTTASTRKMSLAPQANLTEMDIYSRRLSQDSGLEISEEINEEDLKECFFDDVESIPPVTTWNTYLRYITVHKNLIFVLIWCLVIFLAEVAVSLVVLWILRNLSSQDKGNSTQSVNSSYAVIFTSTSAYYIFYIYVGVADTLLALGLFRGLPLVHTLITVSKILHHKMLHSVLQAPMSTLNTLKAGGILNRFSKDIAILDDLLPLTIFDFIQLLLIVIGAVAVVSVLQPYIFLATVPVIAAFIILRAYFLHTSQQLKQLESEGRSPIFTHLLTSLKGLWTLRAFGRQPYFETLFHKALNLHTANWFLYLSTLRWFQMRMEIIFVIFFIAVTFISILTTGEGEGTVGIILTLAMNIMGTLQWAVNSSIEVDSLMRSVSRVFKFIDMPTEESKPPTKSFKPSKDAQLSKVTITENRHVREDDIWPSGGQMTVKDLTAKYIDGGNAILENISFSISPGQRVGLLGRTGSGKSTLLSALLRLVNTEGEIQIDGVSWDSIPLQEWRRAFGVIPQKVFIFSGTFRKNLDPYGQWNDQEIWKVADEVGLRSVIEQFPGKLDFVLVDGGYVLSHGHKQLMCLARSVLRKAKILLLDEPSAHLDPITYQIIRRTLKQAFADCTVILSEHRIEAMLECQRFLVIEDSRLRQFESIQRLLSERSAFRQAIGPPERPGLLPHRLSSRQRSPSRIAALKEETEDEVQDTRL.

At 1-77 the chain is on the cytoplasmic side; that stretch reads MQRSPLEKAS…KLINALRRCF (77 aa). A helical membrane pass occupies residues 78–98; the sequence is FWRFAFYGILLYLGEVTKAVQ. The region spanning 81–365 is the ABC transmembrane type-1 1 domain; sequence FAFYGILLYL…WAVQTWYDSL (285 aa). Residues 99–122 lie on the Extracellular side of the membrane; it reads PLLLGRIIASYDPDNKQERSIAIY. The helical transmembrane segment at 123 to 146 threads the bilayer; sequence LAIGLCLLFIMRPLLLHPAIFGLH. Topologically, residues 147-195 are cytoplasmic; sequence HIGMQIRIAMFSLIYKKTLKLSSRVLDKISIGQLVSLLSNNLNKFDEGL. A helical membrane pass occupies residues 196–216; the sequence is ALAHFVWIAPLQVTLLMGLLW. The Extracellular segment spans residues 217–222; it reads DLLQAS. A helical membrane pass occupies residues 223 to 243; that stretch reads AFCGLAFLIVLALVQAGLGRM. Over 244–298 the chain is Cytoplasmic; the sequence is IMKYRDQRAGKINERLVITSEVIENIQSVKAYCWEEAMEKIIENIRQTELKLTRK. Residues 299-319 form a helical membrane-spanning segment; sequence AAHVRYFNSSAFFFSGFFVVS. At 320-339 the chain is on the extracellular side; it reads LSVLPYALIKTIILRKIFTT. A helical membrane pass occupies residues 340 to 358; sequence ISFCIVLRMAVTRQFPWAV. The Cytoplasmic portion of the chain corresponds to 359–859; it reads QTWYDSLGAI…YLRYITVHKN (501 aa). ATP contacts are provided by residues Trp-401, Ser-434, 458-465, and Gln-493; that span reads GSTGAGKT. The 224-residue stretch at 423-646 folds into the ABC transporter 1 domain; sequence NGDNSLFFSN…RPDFSSKLMG (224 aa). Cys-524 carries S-palmitoyl cysteine lipidation. Ser-549 and Ser-660 each carry phosphoserine. A disordered R region region spans residues 654–832; that stretch reads SPERRNSIIT…EEINEEDLKE (179 aa). Ser-670 is modified (phosphoserine; by PKA). Ser-686 is modified (phosphoserine). Lys-688 participates in a covalent cross-link: Glycyl lysine isopeptide (Lys-Gly) (interchain with G-Cter in ubiquitin). Phosphoserine occurs at positions 700 and 712. Phosphothreonine is present on Thr-717. Phosphoserine is present on residues Ser-737, Ser-768, Ser-791, Ser-796, and Ser-814. A helical membrane pass occupies residues 860–880; sequence LIFVLIWCLVIFLAEVAVSLV. In terms of domain architecture, ABC transmembrane type-1 2 spans 860–1156; the sequence is LIFVLIWCLV…AVNSSIEVDS (297 aa). Topologically, residues 881–919 are extracellular; sequence VLWILRNLSSQDKGNSTQSVNSSYAVIFTSTSAYYIFYI. Residues Asn-887, Asn-895, and Asn-901 are each glycosylated (N-linked (GlcNAc...) asparagine). A discontinuously helical transmembrane segment spans residues 920–940; the sequence is YVGVADTLLALGLFRGLPLVH. At 941–991 the chain is on the cytoplasmic side; that stretch reads TLITVSKILHHKMLHSVLQAPMSTLNTLKAGGILNRFSKDIAILDDLLPLT. Residues 992 to 1012 traverse the membrane as a helical segment; that stretch reads IFDFIQLLLIVIGAVAVVSVL. The Extracellular portion of the chain corresponds to 1013-1014; the sequence is QP. Residues 1015 to 1035 form a helical membrane-spanning segment; sequence YIFLATVPVIAAFIILRAYFL. Residues 1036–1096 are Cytoplasmic-facing; that stretch reads HTSQQLKQLE…TANWFLYLST (61 aa). Residues 1097–1117 traverse the membrane as a helical segment; it reads LRWFQMRMEIIFVIFFIAVTF. The Extracellular segment spans residues 1118–1131; sequence ISILTTGEGEGTVG. A helical membrane pass occupies residues 1132–1152; the sequence is IILTLAMNIMGTLQWAVNSSI. Residues 1153-1483 are Cytoplasmic-facing; it reads EVDSLMRSVS…TEDEVQDTRL (331 aa). Residues 1213–1446 enclose the ABC transporter 2 domain; that stretch reads MTVKDLTAKY…RSAFRQAIGP (234 aa). ATP is bound by residues Tyr-1222 and 1247 to 1254; that span reads GRTGSGKS. Residues 1389-1483 form an interaction with GORASP2 region; it reads RTLKQAFADC…TEDEVQDTRL (95 aa). The S-palmitoyl cysteine moiety is linked to residue Cys-1398. Positions 1444 to 1483 are disordered; the sequence is IGPPERPGLLPHRLSSRQRSPSRIAALKEETEDEVQDTRL. Position 1459 is a phosphoserine (Ser-1459). Acidic residues predominate over residues 1473–1483; sequence ETEDEVQDTRL. A PDZ-binding motif is present at residues 1481–1483; sequence TRL.

This sequence belongs to the ABC transporter superfamily. ABCC family. CFTR transporter (TC 3.A.1.202) subfamily. In terms of assembly, monomer; does not require oligomerization for channel activity. May form oligomers in the membrane. Interacts with SLC26A3, SLC26A6 and NHERF1. Interacts with SHANK2. Interacts with MYO6. Interacts (via C-terminus) with GOPC (via PDZ domain); this promotes CFTR internalization and thereby decreases channel activity. Interacts with SLC4A7 through NHERF1. Found in a complex with MYO5B and RAB11A. Interacts with ANO1. Interacts with SLC26A8. Interacts with AHCYL1; the interaction increases CFTR activity. Interacts with CSE1L. The core-glycosylated form interacts with GORASP2 (via PDZ GRASP-type 1 domain) in respone to ER stress. Interacts with MARCHF2; the interaction leads to CFTR ubiqtuitination and degradation. Interacts with ADGRG2. Post-translationally, N-glycosylated. In terms of processing, phosphorylated; cAMP treatment promotes phosphorylation and activates the channel. Dephosphorylation decreases the ATPase activity (in vitro). Phosphorylation at PKA sites activates the channel. Phosphorylation at PKC sites enhances the response to phosphorylation by PKA. Phosphorylated by AMPK; this inhibits channel activity. Ubiquitinated, leading to its degradation in the lysosome. Deubiquitination by USP10 in early endosomes enhances its endocytic recycling to the cell membrane. Ubiquitinated by RNF185 during ER stress. Ubiquitinated by MARCHF2.

It localises to the apical cell membrane. The protein localises to the early endosome membrane. It is found in the cell membrane. Its subcellular location is the recycling endosome membrane. The protein resides in the endoplasmic reticulum membrane. It localises to the nucleus. The catalysed reaction is ATP + H2O + closed Cl(-) channel = ADP + phosphate + open Cl(-) channel.. It carries out the reaction chloride(in) = chloride(out). It catalyses the reaction hydrogencarbonate(in) = hydrogencarbonate(out). The enzyme catalyses ATP + H2O = ADP + phosphate + H(+). In terms of biological role, epithelial ion channel that plays an important role in the regulation of epithelial ion and water transport and fluid homeostasis. Mediates the transport of chloride ions across the cell membrane. Possesses an intrinsic ATPase activity and utilizes ATP to gate its channel; the passive flow of anions through the channel is gated by cycles of ATP binding and hydrolysis by the ATP-binding domains. The ion channel is also permeable to HCO(3)(-); selectivity depends on the extracellular chloride concentration. Exerts its function also by modulating the activity of other ion channels and transporters. Contributes to the regulation of the pH and the ion content of the epithelial fluid layer. Modulates the activity of the epithelial sodium channel (ENaC) complex, in part by regulating the cell surface expression of the ENaC complex. May regulate bicarbonate secretion and salvage in epithelial cells by regulating the transporter SLC4A7. Can inhibit the chloride channel activity of ANO1. Plays a role in the chloride and bicarbonate homeostasis during sperm epididymal maturation and capacitation. This Canis lupus familiaris (Dog) protein is Cystic fibrosis transmembrane conductance regulator.